We begin with the raw amino-acid sequence, 97 residues long: MNIRPLHDRVIVKRKEVETKSAGGIVLTGSAAAKSTRGEVLAVGNGRILENGEVKPLDVKVGDIVIFNDGYGVKSEKIDNEEVLIMSESDILAIVEA.

This sequence belongs to the GroES chaperonin family. Heptamer of 7 subunits arranged in a ring. Interacts with the chaperonin GroEL.

It localises to the cytoplasm. Functionally, together with the chaperonin GroEL, plays an essential role in assisting protein folding. The GroEL-GroES system forms a nano-cage that allows encapsulation of the non-native substrate proteins and provides a physical environment optimized to promote and accelerate protein folding. GroES binds to the apical surface of the GroEL ring, thereby capping the opening of the GroEL channel. The polypeptide is Co-chaperonin GroES (Escherichia fergusonii (strain ATCC 35469 / DSM 13698 / CCUG 18766 / IAM 14443 / JCM 21226 / LMG 7866 / NBRC 102419 / NCTC 12128 / CDC 0568-73)).